The primary structure comprises 284 residues: MFDKTRLPYVALDVLCVLLAGLPFAILTSRHTPFQRGVFCNDESIKYPYKEDTIPYALLGGIIIPFSIIVIILGETLSVYCNLLHSNSFIRNNYIATIYKAIGTFLFGAAASQSLTDIAKYSIGRLRPHFLDVCDPDWSKINCSDGYIEYYICRGNAERVKEGRLSFYSGHSSFSMYCMLFVALYLQARMKGDWARLLRPTLQFGLVAVSIYVGLSRVSDYKHHWSDVLTGLIQGALVAILVAVYVSDFFKERTSFKERKEEDSHTTLHETPTTGNHYPSNHQP.

Residues 1–6 lie on the Cytoplasmic side of the membrane; sequence MFDKTR. The PDZ-binding; involved in localization to the apical cell membrane motif lies at 5–7; the sequence is TRL. Residues 7–27 traverse the membrane as a helical segment; it reads LPYVALDVLCVLLAGLPFAIL. The Extracellular segment spans residues 28–53; that stretch reads TSRHTPFQRGVFCNDESIKYPYKEDT. The chain crosses the membrane as a helical span at residues 54–74; the sequence is IPYALLGGIIIPFSIIVIILG. The Cytoplasmic portion of the chain corresponds to 75–94; it reads ETLSVYCNLLHSNSFIRNNY. A helical transmembrane segment spans residues 95–115; sequence IATIYKAIGTFLFGAAASQSL. At 116-164 the chain is on the extracellular side; it reads TDIAKYSIGRLRPHFLDVCDPDWSKINCSDGYIEYYICRGNAERVKEGR. Residues 120–128 form a phosphatase sequence motif I region; the sequence is KYSIGRLRP. Residue N142 is glycosylated (N-linked (GlcNAc...) asparagine). A helical transmembrane segment spans residues 165–185; the sequence is LSFYSGHSSFSMYCMLFVALY. The segment at 168–171 is phosphatase sequence motif II; sequence YSGH. Residue H171 is the Proton donors of the active site. Residues 186-199 are Cytoplasmic-facing; the sequence is LQARMKGDWARLLR. A helical membrane pass occupies residues 200–220; it reads PTLQFGLVAVSIYVGLSRVSD. The segment at 216 to 227 is phosphatase sequence motif III; sequence SRVSDYKHHWSD. Over 221-229 the chain is Extracellular; sequence YKHHWSDVL. Catalysis depends on H223, which acts as the Nucleophile. Residues 230 to 250 form a helical membrane-spanning segment; that stretch reads TGLIQGALVAILVAVYVSDFF. Residues 251–284 lie on the Cytoplasmic side of the membrane; sequence KERTSFKERKEEDSHTTLHETPTTGNHYPSNHQP. The disordered stretch occupies residues 260–284; that stretch reads KEEDSHTTLHETPTTGNHYPSNHQP. A compositionally biased stretch (polar residues) spans 269 to 284; the sequence is HETPTTGNHYPSNHQP.

This sequence belongs to the PA-phosphatase related phosphoesterase family. As to quaternary structure, forms functional homodimers and homooligomers that are not required for substrate recognition and catalytic activity. Can also form heterooligomers with PLPP2 and PLPP3. In terms of processing, N-glycosylated. N-linked sugars are of the complex type. N-glycosylation is not required for the phosphatase activity. Widely expressed with highest expression found in prostate. Found to be down-regulated in colon adenocarcinomas. As to expression, predominant in kidney, lung, placenta and liver. In terms of tissue distribution, predominant in heart and pancreas.

It localises to the cell membrane. The protein localises to the apical cell membrane. Its subcellular location is the membrane raft. It is found in the membrane. The protein resides in the caveola. The enzyme catalyses a 1,2-diacyl-sn-glycero-3-phosphate + H2O = a 1,2-diacyl-sn-glycerol + phosphate. The catalysed reaction is 1,2-dihexadecanoyl-sn-glycero-3-phosphate + H2O = 1,2-dihexadecanoyl-sn-glycerol + phosphate. It carries out the reaction 1,2-di-(9Z-octadecenoyl)-sn-glycero-3-phosphate + H2O = 1,2-di-(9Z-octadecenoyl)-sn-glycerol + phosphate. It catalyses the reaction a monoacyl-sn-glycero-3-phosphate + H2O = a monoacylglycerol + phosphate. The enzyme catalyses (9Z)-octadecenoyl-sn-glycero-3-phosphate + H2O = (9Z-octadecenoyl)-glycerol + phosphate. The catalysed reaction is a 1-acyl-sn-glycero-3-phosphate + H2O = a 1-acyl-sn-glycerol + phosphate. It carries out the reaction 1-(9Z-octadecenoyl)-sn-glycero-3-phosphate + H2O = 1-(9Z-octadecenoyl)-sn-glycerol + phosphate. It catalyses the reaction a 1,2-diacyl-sn-glycerol 3-diphosphate + H2O = a 1,2-diacyl-sn-glycero-3-phosphate + phosphate + H(+). The enzyme catalyses sphing-4-enine 1-phosphate + H2O = sphing-4-enine + phosphate. The catalysed reaction is an N-acylsphing-4-enine 1-phosphate + H2O = an N-acylsphing-4-enine + phosphate. It carries out the reaction N-(octanoyl)-sphing-4-enine-1-phosphate + H2O = N-octanoylsphing-4-enine + phosphate. It catalyses the reaction N-(9Z-octadecenoyl)-ethanolamine phosphate + H2O = N-(9Z-octadecenoyl) ethanolamine + phosphate. The enzyme catalyses 1-hexadecanoyl-2-(9Z-octadecenoyl)-sn-glycero-3-phosphate + H2O = 1-hexadecanoyl-2-(9Z-octadecenoyl)-sn-glycerol + phosphate. It functions in the pathway lipid metabolism; phospholipid metabolism. Magnesium-independent phospholipid phosphatase. Insensitive to N-ethylmaleimide. Inhibited by sphingosine, zinc ions and modestly by propanolol. Inhibited by vanadate. In terms of biological role, magnesium-independent phospholipid phosphatase of the plasma membrane that catalyzes the dephosphorylation of a variety of glycerolipid and sphingolipid phosphate esters including phosphatidate/PA, lysophosphatidate/LPA, diacylglycerol pyrophosphate/DGPP, sphingosine 1-phosphate/S1P and ceramide 1-phosphate/C1P. Also acts on N-oleoyl ethanolamine phosphate/N-(9Z-octadecenoyl)-ethanolamine phosphate, a potential physiological compound. Through its extracellular phosphatase activity allows both the hydrolysis and the cellular uptake of these bioactive lipid mediators from the milieu, regulating signal transduction in different cellular processes. It is for instance essential for the extracellular hydrolysis of S1P and subsequent conversion into intracellular S1P. Involved in the regulation of inflammation, platelets activation, cell proliferation and migration among other processes. May also have an intracellular activity to regulate phospholipid-mediated signaling pathways. This chain is Phospholipid phosphatase 1, found in Homo sapiens (Human).